Reading from the N-terminus, the 1377-residue chain is MAQSYVGQKRIRRYYGKIREVLEMPNLIEVQKSSYDLFLKSGDGPKAADGEGIQGVFQSVFPIKDFNETAVLEFVKYELEKPKYDVDECQQRDMTYAAPLKVTLRLIVFDVDETTGARSVKDIKEQDVYMGDMPLMTANGTFIVNGTERVIVSQMHRSPGVFFDHDKGKTHSSGKLLFACRIIPYRGSWLDFEFDAKDIVFARIDRRRKLPVTTLLYALGMDQEGIMDAYYETVNFKHQKNRGWVTRFFPERVRGTRPTYDLVDAATGEVILKAGEKATPRMVKKWIDEAQITELLVPFDHIVGRYVAQDIINEETGEIWVEAGDELTMEYDRDGEVKGGTLKLLLDQGITDIPVLDIDNVNVGPYIRNTMAADKNMGRDTALMDIYRVMRPGEPPTVEAASNLFDTLFFDSERYDLSAVGRVKMNMRLDLGKPDTQRTLDRDDIIACIKALTELRDGKGEIDDIDHLGNRRVRSVGELMENQYRVGLLRMERAIKERMSSVEIDTIMPQDLINAKPAAAAVREFFGSSQLSQFMDQTNPLSEVTHKRRLSALGPGGLTRERAGFEVRDVHPTHYGRMCPIETPEGQNIGLINSLATFARVNKYGFIETPYRKVVEGAVTDDVVYMSATEEMRHTVAQANAQLDEEGRFVSDLISSRKAGEFMLNPPDAIDLIDVSPKQLVSVAASLIPFLENDDANRALMGSNMQRQAVPLLQSDAPFVGTGIEAVVARDSGAAIMARRAGVIDQVDATRIVVRATEMLEPGEPGVDIYRLRKFKRSNQSSCINQRPLVKVGDVVHRGEVVADGPCTDMGELALGRNVIVAFMPWNGYNYEDSILISERILRDDVYTSIHIEEYEVAARDTKLGPEEITRDIPNVGEEALRNLDEAGIVYIGAEVQPGDILVGKITPKGESPMTPEEKLLRAIFGEKASDVRDTSLRLPPGAYGTIVEVRVFNRHGVDKDERALQIEREEVERLARDRDDELAILERNIYSRLRTLIMGKTAVKGPKGIRAGSEINEDLLSTLSRGQWWQLALGEEADAKEVEALHEQFEAQKRALDHRFEDKVEKVRRGDDLPPGVMKMVKVFVAVKRKLQPGDKMAGRHGNKGVISKVVPIEDMPFLADGTHVDLVLNPLGVPSRMNVGQILETHMGWAARGLGIKIDEALQDYRRSGDLTPVKEAMRLAYGDETYEGAFGDREDEDLVEMAGRVTKGVPIATPVFDGAKEPDVNDALRRAGFDQSGQSIVFDGRTGEQFARPVTVGVKYMLKLHHLVDDKLHARSTGPYSLVTQQPLGGKAQFGGQRLGEMEVWALEAYGAAYTLQEMLTVKSDDVAGRTKMYESIVKGEDNFEAGVPESFNVLVKEVRGLGLNMELLDADEE.

It belongs to the RNA polymerase beta chain family. In terms of assembly, the RNAP catalytic core consists of 2 alpha, 1 beta, 1 beta' and 1 omega subunit. When a sigma factor is associated with the core the holoenzyme is formed, which can initiate transcription.

The enzyme catalyses RNA(n) + a ribonucleoside 5'-triphosphate = RNA(n+1) + diphosphate. In terms of biological role, DNA-dependent RNA polymerase catalyzes the transcription of DNA into RNA using the four ribonucleoside triphosphates as substrates. The chain is DNA-directed RNA polymerase subunit beta from Cereibacter sphaeroides (strain ATCC 17029 / ATH 2.4.9) (Rhodobacter sphaeroides).